The sequence spans 558 residues: TNF receptor-associated factor 5 (558 aa).

The segment at 45–85 (CAFCHSVLHNPHQTGCGHRFCQQCIRSLRELNSVPICPVDK) adopts an RING-type zinc-finger fold. 2 consecutive TRAF-type zinc fingers follow at residues 127 to 181 (DHLQ…TNLQ) and 182 to 239 (DHEE…GNLL). Residues 252–302 (LVLEKNYQLEQRISDLYQSLEQKESKIQQLAETVKKFEKELKQFTQMFGRN) adopt a coiled-coil conformation. A Glycyl lysine isopeptide (Lys-Gly) (interchain with G-Cter in ubiquitin) cross-link involves residue Lys-318. The stretch at 340–400 (LDLRSLVDAV…EERFKQLEGA (61 aa)) forms a coiled coil. An interaction with EIF2AK2/PKR region spans residues 345–558 (LVDAVDSVKQ…AVDLTDLEDL (214 aa)). The MATH domain occupies 403–550 (SGKLIWKVTD…DDTLFLKVAV (148 aa)).

It belongs to the TNF receptor-associated factor family. A subfamily. As to quaternary structure, homotrimer. Heterotrimer with TRAF3. Associates with TNFRSF5/CD40 through interaction with TRAF3. Associates with LTBR/TNFRSF3, TNFRSF4, TNFRSF8/CD30, TNFRSF11A/RANK, TNFRSF13B/TACI, TNFRSF14, TNFRSF17, TNFRSF19/TROY, RIPK2, MAP3K14, MAP3K5, and TRAF and TNF receptor associated protein TDP2. Interacts (via C-terminus) with EIF2AK2/PKR (via the kinase catalytic domain). In terms of processing, ubiquitinated at Lys-318 by the SCF(FBXL2) complex, leading to its degradation by the proteasome.

Its subcellular location is the cytoplasm. It localises to the cytosol. Functionally, adapter protein and signal transducer that links members of the tumor necrosis factor receptor family to different signaling pathways by association with the receptor cytoplasmic domain and kinases. Mediates activation of NF-kappa-B and probably JNK. Seems to be involved in apoptosis. Plays a role in mediating activation of NF-kappa-B by EIF2AK2/PKR. The protein is TNF receptor-associated factor 5 (Traf5) of Mus musculus (Mouse).